A 108-amino-acid polypeptide reads, in one-letter code: UPF0145 protein Ava_0420 (108 aa).

Belongs to the UPF0145 family.

The chain is UPF0145 protein Ava_0420 from Trichormus variabilis (strain ATCC 29413 / PCC 7937) (Anabaena variabilis).